We begin with the raw amino-acid sequence, 463 residues long: Cysteine--tRNA ligase (463 aa).

C29 lines the Zn(2+) pocket. The 'HIGH' region signature appears at 31 to 41; the sequence is PTVYDFAHIGN. Zn(2+) is bound by residues C227, H252, and E256. Positions 285-289 match the 'KMSKS' region motif; it reads KMSKS. K288 contacts ATP.

The protein belongs to the class-I aminoacyl-tRNA synthetase family. In terms of assembly, monomer. Requires Zn(2+) as cofactor.

The protein resides in the cytoplasm. It catalyses the reaction tRNA(Cys) + L-cysteine + ATP = L-cysteinyl-tRNA(Cys) + AMP + diphosphate. The sequence is that of Cysteine--tRNA ligase from Rhodopseudomonas palustris (strain BisA53).